The following is a 435-amino-acid chain: Glutamyl-tRNA reductase (435 aa).

Residues 49–52, Ser-109, 114–116, and Gln-120 each bind substrate; these read TCNR and ETQ. Cys-50 serves as the catalytic Nucleophile. 189 to 194 contacts NADP(+); sequence GAGEMS.

Belongs to the glutamyl-tRNA reductase family. As to quaternary structure, homodimer.

The catalysed reaction is (S)-4-amino-5-oxopentanoate + tRNA(Glu) + NADP(+) = L-glutamyl-tRNA(Glu) + NADPH + H(+). The protein operates within porphyrin-containing compound metabolism; protoporphyrin-IX biosynthesis; 5-aminolevulinate from L-glutamyl-tRNA(Glu): step 1/2. Its function is as follows. Catalyzes the NADPH-dependent reduction of glutamyl-tRNA(Glu) to glutamate 1-semialdehyde (GSA). In Listeria monocytogenes serovar 1/2a (strain ATCC BAA-679 / EGD-e), this protein is Glutamyl-tRNA reductase.